The primary structure comprises 352 residues: Probable RNA methyltransferase CV_2253 (352 aa).

Catalysis depends on glutamate 91, which acts as the Proton acceptor. The region spanning 94-320 (LLPRDGLCVS…TKVRDSAGQD (227 aa)) is the Radical SAM core domain. An intrachain disulfide couples cysteine 101 to cysteine 325. Cysteine 108, cysteine 112, and cysteine 115 together coordinate [4Fe-4S] cluster. S-adenosyl-L-methionine-binding positions include 153 to 154 (GE), serine 183, 206 to 208 (SLH), and asparagine 282. The active-site S-methylcysteine intermediate is the cysteine 325.

It belongs to the radical SAM superfamily. RlmN family. [4Fe-4S] cluster is required as a cofactor.

It localises to the cytoplasm. The protein is Probable RNA methyltransferase CV_2253 of Chromobacterium violaceum (strain ATCC 12472 / DSM 30191 / JCM 1249 / CCUG 213 / NBRC 12614 / NCIMB 9131 / NCTC 9757 / MK).